We begin with the raw amino-acid sequence, 543 residues long: ABC transport system permease protein p69 (543 aa).

Helical transmembrane passes span 18-38, 78-98, 115-135, 141-161, 211-231, 237-257, 288-308, 354-374, 379-399, 413-433, 482-502, and 510-530; these read IWYWKLLIIIAVLAIVIYSWI, AFFVTGGSFLGFIFAILFSYW, ITIVLRAFPVLLFGFLFSNLF, ATLTISWFSFLWNTKYITTFF, TLLSIFGIGGIGQLIVDPLSI, LVLIPLVVLITFLIFIEVVVF, IIFILFIVVLISLSLANLVTI, ISLISLVVIFSILFGFISCNL, FSISFKILLLFVRVVPSILLF, IILVLLINHGSSYGQLMSINF, LILFGSFGGSIIGSRITNFFE, and GSVTIPLMVYLIAIEIIFLSV. The ABC transmembrane type-1 domain occupies 74–256; that stretch reads LAQTAFFVTG…TFLIFIEVVV (183 aa).

The protein belongs to the binding-protein-dependent transport system permease family.

The protein localises to the cell membrane. Its function is as follows. Probably part of a high-affinity transport system. This Mycoplasma genitalium (strain ATCC 33530 / DSM 19775 / NCTC 10195 / G37) (Mycoplasmoides genitalium) protein is ABC transport system permease protein p69 (p69).